A 231-amino-acid chain; its full sequence is Vacuolar protein sorting-associated protein 24 (231 aa).

The segment covering lysine 184–serine 195 has biased composition (basic and acidic residues). The interval lysine 184–isoleucine 214 is disordered.

The protein belongs to the SNF7 family. In terms of assembly, component of the endosomal sorting required for transport complex III (ESCRT-III).

It is found in the endosome membrane. The protein resides in the endomembrane system. Functionally, class E VPS protein implicated in concentration and sorting of cargo proteins of the multivesicular body (MVB) for incorporation into intralumenal vesicles. The lumenal sequestrated membrane proteins will be targeted into the vacuole after fusion of the endosome with the vacuole. The protein is Vacuolar protein sorting-associated protein 24 (vps24) of Schizosaccharomyces pombe (strain 972 / ATCC 24843) (Fission yeast).